The following is a 119-amino-acid chain: Large ribosomal subunit protein uL24 (119 aa).

The protein belongs to the universal ribosomal protein uL24 family. In terms of assembly, part of the 50S ribosomal subunit.

Functionally, one of two assembly initiator proteins, it binds directly to the 5'-end of the 23S rRNA, where it nucleates assembly of the 50S subunit. In terms of biological role, one of the proteins that surrounds the polypeptide exit tunnel on the outside of the subunit. In Clavibacter sepedonicus (Clavibacter michiganensis subsp. sepedonicus), this protein is Large ribosomal subunit protein uL24.